The chain runs to 258 residues: Protein UL24 homolog (258 aa).

Belongs to the herpesviridae UL24 family.

It is found in the virion. It localises to the host cytoplasm. Its subcellular location is the host nucleus. The protein resides in the host nucleolus. The protein localises to the host Golgi apparatus. Functionally, may participate in nuclear egress of viral particles. Plays a role in the dispersal of several host nucleolar proteins including NCL/nucleolin and NPM1. Since deletion of host NCL/nucleolin negatively impact on nuclear egress, UL24 supposedly acts on this process through its effect on host nucleoli. This chain is Protein UL24 homolog, found in Homo sapiens (Human).